A 312-amino-acid chain; its full sequence is MELLALRWVLLAGTLLSTSAASSALQEGDLGSITVIMDMALNSFDDQYLLCEDRMRARLQMENITEFSTNIAYAVTWRQAAAEWQKRWGHLARPMQLIREQAIALLAYSASSRMCTLFNEATRQGGRSHQDYIHSYHFKTLHFFLTQALFALRASQPRCYYVYRGVRGIRFMTQRGKSVRFGQFTSTSLRKEATVNFGQDTLFVVKTCYGVPIKQFSFFPSEDEVLIPPFEVFEVINFSNDRGSVKIQLHSKGKMSTHNCELLKPQGGQWGRGHQEVGLGLSPGLSLPVLPCRRRVWEGLGHREGDPIPAAV.

The N-terminal stretch at 1 to 20 is a signal peptide; that stretch reads MELLALRWVLLAGTLLSTSA. Residues 21 to 31 constitute a propeptide that is removed on maturation; it reads ASSALQEGDLG. Intrachain disulfides connect cysteine 51-cysteine 260 and cysteine 159-cysteine 208. In terms of domain architecture, TR mART core spans 71–256; it reads IAYAVTWRQA…IQLHSKGKMS (186 aa). Residues tyrosine 108, arginine 164, and glutamine 183 each contribute to the NAD(+) site. Arginine 164 is an active-site residue. Serine 186 is a catalytic residue. An NAD(+)-binding site is contributed by serine 217. Glutamate 224 is a catalytic residue. Positions 267-312 are excised as a propeptide; it reads GGQWGRGHQEVGLGLSPGLSLPVLPCRRRVWEGLGHREGDPIPAAV.

Belongs to the Arg-specific ADP-ribosyltransferase family.

It is found in the secreted. The protein localises to the extracellular space. It carries out the reaction L-arginyl-[protein] + NAD(+) = N(omega)-(ADP-D-ribosyl)-L-arginyl-[protein] + nicotinamide + H(+). This is NAD(P)(+)--arginine ADP-ribosyltransferase 1 from Gallus gallus (Chicken).